We begin with the raw amino-acid sequence, 558 residues long: Atlastin-1 (558 aa).

A disordered region spans residues 1–27 (MAKNRRDRNSWGGFSEKTYEWSSEEEE). The interval 1–34 (MAKNRRDRNSWGGFSEKTYEWSSEEEEPVKKAGP) is N-terminal hypervariable region (HVR). The Cytoplasmic segment spans residues 1-449 (MAKNRRDRNS…NIFHAARTPA (449 aa)). Residues serine 10, serine 22, and serine 23 each carry the phosphoserine modification. In terms of domain architecture, GB1/RHD3-type G spans 64–309 (DKEVVAVSVA…LIPWLLSPES (246 aa)). Residues arginine 77, lysine 78, glycine 79, lysine 80, serine 81, phenylalanine 82, glutamine 148, arginine 217, aspartate 218, valine 276, and asparagine 279 each coordinate GDP. Arginine 77, lysine 78, glycine 79, lysine 80, serine 81, and phenylalanine 82 together coordinate GTP. Serine 81 contacts Mg(2+). 3 residues coordinate GTP: arginine 217, aspartate 218, and valine 276. The tract at residues 347–438 (MLQATAEANN…YIQYIKHNDS (92 aa)) is 3HB (three-helix bundle) domain. An N6-acetyllysine modification is found at lysine 395. Positions 412 to 439 (EFSRRYLQQLESEIDELYIQYIKHNDSK) form a coiled coil. The interval 439 to 447 (KNIFHAART) is linker. Residues 450–470 (TLFVVIFITYVIAGVTGFIGL) form a helical membrane-spanning segment. Residue aspartate 471 is a topological domain, lumenal. A helical transmembrane segment spans residues 472-492 (IIASLCNMIMGLTLITLCTWA). Over 493-558 (YIRYSGEYRE…STEQSEKKKM (66 aa)) the chain is Cytoplasmic. The autoinhibitory domain stretch occupies residues 521 to 558 (NEALYKLYSAAATHRHLYHQAFPTPKSESTEQSEKKKM).

Belongs to the TRAFAC class dynamin-like GTPase superfamily. GB1/RHD3 GTPase family. GB1 subfamily. As to quaternary structure, monomeric and homodimeric. The homodimer, transiently formed by two molecules on opposing membranes, is the active form mediating ER membrane fusion. Interacts with REEP1, REEP5, RTN3 and RTN4 (via the transmembrane region); these proteins are involved in endoplasmic reticulum tubular network organization. Interacts with ZFYVE27; both proteins are involved in endoplasmic reticulum tubular network organization. Interacts with ARL6IP1; both proteins are involved in endoplasmic reticulum tubular network organization. Interacts with SPAST; the interaction is direct, could recruit SPAST to Golgi membranes. Interacts (via N-terminal region) with MAP4K4 (via CNH regulatory domain). May interact with TMED2. Interacts with CPT1C. Phosphorylated. Phosphorylation, by different kinases, of the N-terminal hypervariable region (HVR) regulates the ATL1-mediated membrane tethering step.

It is found in the endoplasmic reticulum membrane. The protein localises to the golgi apparatus membrane. Its subcellular location is the cell projection. It localises to the axon. The enzyme catalyses GTP + H2O = GDP + phosphate + H(+). Atlastin-1 (ATL1) is a membrane-anchored GTPase that mediates the GTP-dependent fusion of endoplasmic reticulum (ER) membranes, maintaining the continuous ER network. It facilitates the formation of three-way junctions where ER tubules intersect. Two atlastin-1 on neighboring ER tubules bind GTP and form loose homodimers through the GB1/RHD3-type G domains and 3HB regions. Upon GTP hydrolysis, the 3HB regions tighten, pulling the membranes together to drive their fusion. After fusion, the homodimer disassembles upon release of inorganic phosphate (Pi). Subsequently, GDP dissociates, resetting the monomers to a conformation ready for a new fusion cycle. May also regulate more or less directly Golgi biogenesis. Indirectly regulates axonal development. This Macaca fascicularis (Crab-eating macaque) protein is Atlastin-1.